We begin with the raw amino-acid sequence, 188 residues long: Adenylate kinase (188 aa).

12-17 (GSGKTT) provides a ligand contact to ATP. The NMP stretch occupies residues 33-62 (STGDLLRAEVASGSELGKKIDSFISKGNLV). AMP contacts are provided by residues threonine 34, arginine 39, 60–62 (NLV), 87–90 (GYPR), and glutamine 94. An LID region spans residues 129-135 (GRARGAD). An ATP-binding site is contributed by arginine 130. Arginine 132 and arginine 144 together coordinate AMP. Residue arginine 172 participates in ATP binding.

This sequence belongs to the adenylate kinase family. In terms of assembly, monomer.

Its subcellular location is the cytoplasm. The enzyme catalyses AMP + ATP = 2 ADP. The protein operates within purine metabolism; AMP biosynthesis via salvage pathway; AMP from ADP: step 1/1. Catalyzes the reversible transfer of the terminal phosphate group between ATP and AMP. Plays an important role in cellular energy homeostasis and in adenine nucleotide metabolism. This is Adenylate kinase from Campylobacter curvus (strain 525.92).